Here is a 281-residue protein sequence, read N- to C-terminus: Small ribosomal subunit protein uS3 (281 aa).

Residues 38–106 enclose the KH type-2 domain; that stretch reads IRRLLSTGLE…QVQLNILEVK (69 aa). The interval 218-281 is disordered; that stretch reads APAGAERARR…VTHEPQIAES (64 aa). Over residues 238–256 the composition is skewed to low complexity; it reads SGAAGTTVTGTDAGRAVGG.

The protein belongs to the universal ribosomal protein uS3 family. In terms of assembly, part of the 30S ribosomal subunit. Forms a tight complex with proteins S10 and S14.

Its function is as follows. Binds the lower part of the 30S subunit head. Binds mRNA in the 70S ribosome, positioning it for translation. The chain is Small ribosomal subunit protein uS3 from Mycobacterium leprae (strain Br4923).